The following is a 164-amino-acid chain: 3-isopropylmalate dehydratase small subunit 2 (164 aa).

Belongs to the LeuD family. LeuD type 2 subfamily. Heterodimer of LeuC and LeuD.

The enzyme catalyses (2R,3S)-3-isopropylmalate = (2S)-2-isopropylmalate. Its pathway is amino-acid biosynthesis; L-leucine biosynthesis; L-leucine from 3-methyl-2-oxobutanoate: step 2/4. Functionally, catalyzes the isomerization between 2-isopropylmalate and 3-isopropylmalate, via the formation of 2-isopropylmaleate. The chain is 3-isopropylmalate dehydratase small subunit 2 (leuD2) from Pyrococcus furiosus (strain ATCC 43587 / DSM 3638 / JCM 8422 / Vc1).